A 311-amino-acid chain; its full sequence is MKVAVLGAAGGIGQALALLLKTQLPAGSKLSLYDIAPVTPGVAVDLSHIPTAVEIKGFAGEDPTPALVDADVVLISAGVARKPGMDRSDLFNINAGIVRNLMEKVAATCPKALVGIITNPVNTTVAIAAEVMKKAGVYDKNRLFGVTTLDVIRSETFIAELKGLNVADVNINVIGGHSGVTILPLLSQVKGVSFTDEEVAALTKRIQNAGTEVVEAKAGGGSATLSMGQAACRFGLSLVRGLQGEANVVECAYVDGGSEHAQFFAQPILLGKNGVEKVMPYGEVSAFEANARDAMLDTLNADIKLGVEFVK.

NAD(+) contacts are provided by residues 7 to 13 (GAAGGIG) and Asp34. Positions 81 and 87 each coordinate substrate. NAD(+) contacts are provided by residues Asn94 and 117–119 (ITN). Residues Asn119 and Arg153 each contribute to the substrate site. The active-site Proton acceptor is the His177. An NAD(+)-binding site is contributed by Met227.

It belongs to the LDH/MDH superfamily. MDH type 1 family. In terms of assembly, homodimer.

It catalyses the reaction (S)-malate + NAD(+) = oxaloacetate + NADH + H(+). Functionally, catalyzes the reversible oxidation of malate to oxaloacetate. This chain is Malate dehydrogenase, found in Shewanella denitrificans (strain OS217 / ATCC BAA-1090 / DSM 15013).